Consider the following 146-residue polypeptide: uncharacterized protein (146 aa).

The next 2 membrane-spanning stretches (helical) occupy residues 89-111 (AIEM…LLLY) and 121-143 (IGCG…YSVV).

The protein resides in the cell membrane. This is an uncharacterized protein from Archaeoglobus fulgidus (strain ATCC 49558 / DSM 4304 / JCM 9628 / NBRC 100126 / VC-16).